The primary structure comprises 90 residues: Acylphosphatase (90 aa).

The Acylphosphatase-like domain maps to 4 to 90 (RWRFLIEGSV…TGNDWFDVRT (87 aa)). Active-site residues include Arg19 and Asn37.

Belongs to the acylphosphatase family.

The catalysed reaction is an acyl phosphate + H2O = a carboxylate + phosphate + H(+). The protein is Acylphosphatase (acyP) of Synechococcus sp. (strain CC9311).